A 324-amino-acid chain; its full sequence is Methenyltetrahydromethanopterin cyclohydrolase (324 aa).

Belongs to the MCH family.

It is found in the cytoplasm. The catalysed reaction is 5,10-methenyl-5,6,7,8-tetrahydromethanopterin + H2O = N(5)-formyl-5,6,7,8-tetrahydromethanopterin + H(+). The protein operates within one-carbon metabolism; formaldehyde degradation; formate from formaldehyde (H(4)MPT route): step 3/5. Functionally, catalyzes the hydrolysis of methenyl-H(4)MPT(+) to 5-formyl-H(4)MPT. The chain is Methenyltetrahydromethanopterin cyclohydrolase from Methylobacterium sp. (strain 4-46).